Reading from the N-terminus, the 191-residue chain is Ribosome maturation factor RimM (191 aa).

The PRC barrel domain maps to E102–L185.

This sequence belongs to the RimM family. As to quaternary structure, binds ribosomal protein uS19.

It localises to the cytoplasm. Functionally, an accessory protein needed during the final step in the assembly of 30S ribosomal subunit, possibly for assembly of the head region. Essential for efficient processing of 16S rRNA. May be needed both before and after RbfA during the maturation of 16S rRNA. It has affinity for free ribosomal 30S subunits but not for 70S ribosomes. The sequence is that of Ribosome maturation factor RimM from Crocosphaera subtropica (strain ATCC 51142 / BH68) (Cyanothece sp. (strain ATCC 51142)).